The primary structure comprises 152 residues: Histone H2B.1 (152 aa).

Positions 1 to 23 (MAPKAEKKPAEKKPAAGEEKSAE) are enriched in basic and acidic residues. The disordered stretch occupies residues 1–60 (MAPKAEKKPAEKKPAAGEEKSAEKAPAGKKPKAEKRLPASKASSKEGGAGDKKGRKKAKK). N6-acetyllysine is present on residues lysine 7 and lysine 35. Lysine 148 is covalently cross-linked (Glycyl lysine isopeptide (Lys-Gly) (interchain with G-Cter in ubiquitin)).

It belongs to the histone H2B family. As to quaternary structure, the nucleosome is a histone octamer containing two molecules each of H2A, H2B, H3 and H4 assembled in one H3-H4 heterotetramer and two H2A-H2B heterodimers. The octamer wraps approximately 147 bp of DNA. In terms of processing, can be acetylated to form H2BK6ac and H2BK33ac. Post-translationally, monoubiquitinated by BRE1 to form H2BK143ub1 and deubiquitinated by UBP26. Required for heterochromatic histone H3 di- and trimethylation at H3K4me. May give a specific tag for epigenetic transcriptional activation.

The protein resides in the nucleus. The protein localises to the chromosome. Core component of nucleosome. Nucleosomes wrap and compact DNA into chromatin, limiting DNA accessibility to the cellular machineries which require DNA as a template. Histones thereby play a central role in transcription regulation, DNA repair, DNA replication and chromosomal stability. DNA accessibility is regulated via a complex set of post-translational modifications of histones, also called histone code, and nucleosome remodeling. This chain is Histone H2B.1, found in Oryza sativa subsp. indica (Rice).